We begin with the raw amino-acid sequence, 389 residues long: Pre-mRNA-splicing factor PRP46 (389 aa).

7 WD repeats span residues Ala83–Val123, Gly126–Gly165, Gly173–Thr212, Gly215–Leu254, Asn257–Gly298, Asp308–Ser347, and Pro356–Tyr389.

It belongs to the WD repeat PRL1/PRL2 family. Associated with the spliceosome.

It is found in the cytoplasm. The protein localises to the nucleus. Functionally, involved in pre-mRNA splicing and required for cell cycle progression at G2/M. This chain is Pre-mRNA-splicing factor PRP46 (PRP46), found in Candida albicans (strain SC5314 / ATCC MYA-2876) (Yeast).